The following is a 950-amino-acid chain: Defective chorion protein, FC106 isoform (950 aa).

A signal peptide spans 1–19 (MRLFSLLPLLALLVVQAAG). 3 disordered regions span residues 23 to 60 (VTSD…PSIN), 184 to 212 (APAP…PDAP), and 268 to 294 (PAQP…EDPY). Over residues 32–41 (AGSTTNSTTD) the composition is skewed to polar residues. The span at 268-280 (PAQPAAAGTDAQA) shows a compositional bias: low complexity. Repeat copies occupy residues 493–518 (QNPM…QQIQ), 519–544 (QNPM…QQIQ), 545–570 (QNPM…QQIQ), 571–596 (QNPM…QQIQ), and 597–622 (QNPM…QQIQ). Residues 493–788 (QNPMMMQQRQ…IQQQQRQMMQ (296 aa)) are 12 X 26 AA approximate tandem repeats, Glu, Met-rich. The 6; approximate repeat unit spans residues 623 to 652 (QNPMMMQQRQWSEEQAKIQHDQQMAQQMAQ). The stretch at 653–680 (QGLMMTEQRQRQWSEDQAKIQQAQQMAQ) is one 7; approximate repeat. An 8; approximate repeat occupies 681–696 (QTPMMMPQMQQRQWTE). One copy of the 9; approximate repeat lies at 697–720 (DPQMVQQMQQRQWAEDQTRMQMAQ). The stretch at 721–733 (QNPMMQQQRQMAE) is one 10; approximate repeat. An 11; approximate repeat occupies 734–758 (NPQMMQQRQWSEEQTKIEQAQQMAQ). Residues 759–788 (QNQMMMQQMQQRQWSEDQAQIQQQQRQMMQ) form a 12; approximate repeat. Residues 843–875 (GPQMPENEGTARHKVDALGVGGNKRKKSKSKSA) are disordered.

In terms of processing, proteolytic cleavage of isoform FC106 generates 2 further products, S80 and S60.

It localises to the secreted. Required for proper assembly of the eggshell. This is Defective chorion protein, FC106 isoform from Drosophila melanogaster (Fruit fly).